The following is a 130-amino-acid chain: Iron-sulfur cluster insertion protein ErpA 2 (130 aa).

Iron-sulfur cluster-binding residues include C58, C122, and C124.

The protein belongs to the HesB/IscA family. In terms of assembly, homodimer. Iron-sulfur cluster is required as a cofactor.

Required for insertion of 4Fe-4S clusters for at least IspG. This is Iron-sulfur cluster insertion protein ErpA 2 from Methylococcus capsulatus (strain ATCC 33009 / NCIMB 11132 / Bath).